Consider the following 180-residue polypeptide: LDLR chaperone boca (180 aa).

Residues 1-18 (MQTRLVLLLLALTPLVLA) form the signal peptide. The span at 48–61 (QWEEDEEPLEDDEL) shows a compositional bias: acidic residues. The segment at 48–78 (QWEEDEEPLEDDELPEHLRPQPKLDLSNLDS) is disordered. Residues 93-166 (TLMTFVSVTG…QERCKGVTIE (74 aa)) are structured core. Residues 177–180 (KDEL) carry the Prevents secretion from ER motif.

This sequence belongs to the MESD family. In terms of assembly, monomer. Interacts with Arrow and Yolkless.

The protein resides in the endoplasmic reticulum. In terms of biological role, chaperone specifically assisting the folding of beta-propeller/EGF modules within the family of low-density lipoprotein receptors (LDLRs). Acts as a modulator of the Wg pathway, since some LDLRs are coreceptors for the canonical Wnt pathway. The chain is LDLR chaperone boca (boca) from Drosophila melanogaster (Fruit fly).